A 96-amino-acid chain; its full sequence is (4S)-4-hydroxy-5-phosphonooxypentane-2,3-dione isomerase (96 aa).

The 90-residue stretch at 2-91 (HVTLVEINVK…MTGPRKKTTF (90 aa)) folds into the ABM domain.

The protein belongs to the LsrG family. As to quaternary structure, homodimer.

It is found in the cytoplasm. The enzyme catalyses (2S)-2-hydroxy-3,4-dioxopentyl phosphate = 3-hydroxy-2,4-dioxopentyl phosphate. Its function is as follows. Involved in the degradation of phospho-AI-2, thereby terminating induction of the lsr operon and closing the AI-2 signaling cycle. Catalyzes the conversion of (4S)-4-hydroxy-5-phosphonooxypentane-2,3-dione (P-DPD) to 3-hydroxy-5-phosphonooxypentane-2,4-dione (P-HPD). In Yersinia enterocolitica serotype O:8 / biotype 1B (strain NCTC 13174 / 8081), this protein is (4S)-4-hydroxy-5-phosphonooxypentane-2,3-dione isomerase.